The sequence spans 148 residues: Cytochrome c-type biogenesis protein CcmE (148 aa).

The Cytoplasmic segment spans residues 1–7 (MKPRNRR). A helical; Signal-anchor for type II membrane protein membrane pass occupies residues 8 to 28 (IALIVAGLSALGIATALVLNA). Over 29-148 (FQSNLVFFFT…VQKKPASRKP (120 aa)) the chain is Periplasmic. Heme is bound by residues His123 and Tyr127. The tract at residues 128-148 (MPPEAQHALDEVQKKPASRKP) is disordered.

This sequence belongs to the CcmE/CycJ family.

The protein localises to the cell inner membrane. Functionally, heme chaperone required for the biogenesis of c-type cytochromes. Transiently binds heme delivered by CcmC and transfers the heme to apo-cytochromes in a process facilitated by CcmF and CcmH. In Pseudomonas aeruginosa, this protein is Cytochrome c-type biogenesis protein CcmE.